Consider the following 70-residue polypeptide: Conotoxin Lt11.6 (70 aa).

A signal peptide spans 1 to 26; it reads MMFRLTSVGSFLLVIVFLNLVVLTNA. Cystine bridges form between C27–C41, C34–C46, C40–C50, and C45–C54. Positions 58–70 are excised as a propeptide; it reads AQRQKLLRSFGQR.

This sequence belongs to the conotoxin I2 superfamily. In terms of tissue distribution, expressed by the venom duct.

It localises to the secreted. The chain is Conotoxin Lt11.6 from Conus litteratus (Lettered cone).